An 881-amino-acid chain; its full sequence is Disks large homolog 2 (881 aa).

Disordered regions lie at residues 16–41 and 63–88; these read HRQQ…MNPA and LSTT…SFPR. PDZ domains are found at residues 155–242, 250–337, and 424–505; these read EITL…RRRR, EIKL…GKPT, and KIVL…QYRP. Residues 539–609 form the SH3 domain; that stretch reads KRSLYVRALF…PSKRRVERKE (71 aa). The region spanning 683–866 is the Guanylate kinase-like domain; sequence ARPVIILGPM…IYNQCKMVIE (184 aa). The disordered stretch occupies residues 709–729; sequence GSCVPPANSSDQEDTTRPKRD.

It belongs to the MAGUK family.

The protein localises to the cell membrane. The protein resides in the postsynaptic density. Its subcellular location is the synapse. It localises to the membrane. It is found in the cell projection. The protein localises to the axon. The protein resides in the perikaryon. Functionally, may play a role in synapse assembly and function. The protein is Disks large homolog 2 (dlg2) of Danio rerio (Zebrafish).